A 235-amino-acid chain; its full sequence is Octanoyltransferase (235 aa).

In terms of domain architecture, BPL/LPL catalytic spans 44–231; it reads DTTADELWLV…HQVGLPNENN (188 aa). Substrate-binding positions include 83–90, 150–152, and 163–165; these read RGGQVTYH, SLG, and GLA. Residue Cys181 is the Acyl-thioester intermediate of the active site.

This sequence belongs to the LipB family.

Its subcellular location is the cytoplasm. The enzyme catalyses octanoyl-[ACP] + L-lysyl-[protein] = N(6)-octanoyl-L-lysyl-[protein] + holo-[ACP] + H(+). It functions in the pathway protein modification; protein lipoylation via endogenous pathway; protein N(6)-(lipoyl)lysine from octanoyl-[acyl-carrier-protein]: step 1/2. In terms of biological role, catalyzes the transfer of endogenously produced octanoic acid from octanoyl-acyl-carrier-protein onto the lipoyl domains of lipoate-dependent enzymes. Lipoyl-ACP can also act as a substrate although octanoyl-ACP is likely to be the physiological substrate. In Colwellia psychrerythraea (strain 34H / ATCC BAA-681) (Vibrio psychroerythus), this protein is Octanoyltransferase.